The chain runs to 931 residues: Protein unc-45 homolog B (931 aa).

TPR repeat units follow at residues 6–39, 43–76, and 77–110; these read AAQL…TKDK, ATLY…NSAD, and IKAL…EPRN. 3 ARM repeats span residues 169–208, 211–250, and 751–790; these read EAGA…GMCS, RARA…AIID, and DKLR…NMVL.

As to quaternary structure, interacts with HSP90 in an ATP-independent manner. Interacts with UBE4B; the interaction may target UNC45B for proteasomal degradation. As to expression, highly expressed in adult skeletal muscle and heart. Detected at intermediate levels in lung. Highly expressed in embryonic heart.

The protein localises to the cytoplasm. Its subcellular location is the myofibril. The protein resides in the sarcomere. It localises to the z line. It is found in the a band. The protein localises to the perinuclear region. Its subcellular location is the cytosol. Functionally, acts as a co-chaperone for HSP90 and is required for proper folding of the myosin motor domain. Plays a role in sarcomere formation during muscle cell development. Is necessary for normal early lens development. This Mus musculus (Mouse) protein is Protein unc-45 homolog B (Unc45b).